A 714-amino-acid polypeptide reads, in one-letter code: MEMASAFTLNVRLDNIAVITIDVPGEKMNTLKAEFASQVRAIIKQLRENKDLRGVVFISAKPDNFIAGADINMIANCKTAQEAEALARQGQQLMAEIHALPVPVIAAIHGACLGGGLELALACHGRVCTDDPKTVLGLPEVQLGLLPGSGGTQRLPRLIGVSTALEMILTGKQLRAKQALKLGLVDDVVPHSILLEAAVELAKQDRPSSRPLPVRERILAGPLGRALLFKMVGKKTEQKTQGNYPATKRILDVIETGLAQGTSSGYDAEARAFGELAMTPQSQALRNIFFASTEVKKDPGSDAPPAPLNSVGILGGGLMGGGIAYVTACKAGLPVRIKDINPQGINHALKYSWDQLEGKVRRRHLKASERDKQLALISGTTDYRGFAHRDLIIEAVFENLELKQQMVAEVEQNCAAHTIFASNTSSLPIADIAAHAARPEQVIGLHFFSPVEKMPLVEIIPHAGTSAQTIATTVKLAKKQGKTPIVVRDKAGFYVNRILAPYINEAIRMLTEGERVEHIDAALVKFGFPVGPIQLLDEVGIDTGTKIIPVLEAAYGERFSAPANVVSSILNDDRKGRKNGRGFYLYGQKGRKSKKQVDPAIYPLIGAQGQGRLSAPQVAERCVMLMLNEAVRCLDEQVIRSVRDGDIGAVFGIGFPPFLGGPFRYIDSLGAGEVVAIMQRLATQYGSRFTPCERLVEMSKRGESFWKTTATDLQ.

The enoyl-CoA hydratase stretch occupies residues 1–190 (MEMASAFTLN…KLGLVDDVVP (190 aa)). Residues 306–714 (APLNSVGILG…FWKTTATDLQ (409 aa)) form a 3-hydroxyacyl-CoA dehydrogenase region.

In the N-terminal section; belongs to the enoyl-CoA hydratase/isomerase family. The protein in the central section; belongs to the 3-hydroxyacyl-CoA dehydrogenase family. As to quaternary structure, heterotetramer of two alpha chains (FadJ) and two beta chains (FadI).

It localises to the cytoplasm. It catalyses the reaction a (3S)-3-hydroxyacyl-CoA = a (2E)-enoyl-CoA + H2O. It carries out the reaction a 4-saturated-(3S)-3-hydroxyacyl-CoA = a (3E)-enoyl-CoA + H2O. The enzyme catalyses a (3S)-3-hydroxyacyl-CoA + NAD(+) = a 3-oxoacyl-CoA + NADH + H(+). The catalysed reaction is (3S)-3-hydroxybutanoyl-CoA = (3R)-3-hydroxybutanoyl-CoA. Its pathway is lipid metabolism; fatty acid beta-oxidation. In terms of biological role, catalyzes the formation of a hydroxyacyl-CoA by addition of water on enoyl-CoA. Also exhibits 3-hydroxyacyl-CoA epimerase and 3-hydroxyacyl-CoA dehydrogenase activities. This is Fatty acid oxidation complex subunit alpha from Escherichia coli O6:H1 (strain CFT073 / ATCC 700928 / UPEC).